Consider the following 248-residue polypeptide: Orotidine 5'-phosphate decarboxylase (248 aa).

Residues Asp22, Lys44, 71-80 (DLKFHDIPNT), Thr131, Arg192, Gln201, Gly221, and Arg222 each bind substrate. Residue Lys73 is the Proton donor of the active site.

This sequence belongs to the OMP decarboxylase family. Type 1 subfamily. Homodimer.

It carries out the reaction orotidine 5'-phosphate + H(+) = UMP + CO2. The protein operates within pyrimidine metabolism; UMP biosynthesis via de novo pathway; UMP from orotate: step 2/2. Catalyzes the decarboxylation of orotidine 5'-monophosphate (OMP) to uridine 5'-monophosphate (UMP). The sequence is that of Orotidine 5'-phosphate decarboxylase from Photorhabdus laumondii subsp. laumondii (strain DSM 15139 / CIP 105565 / TT01) (Photorhabdus luminescens subsp. laumondii).